The sequence spans 364 residues: Putative glutamate--cysteine ligase 2-2 (364 aa).

It belongs to the glutamate--cysteine ligase type 2 family. YbdK subfamily.

It catalyses the reaction L-cysteine + L-glutamate + ATP = gamma-L-glutamyl-L-cysteine + ADP + phosphate + H(+). Functionally, ATP-dependent carboxylate-amine ligase which exhibits weak glutamate--cysteine ligase activity. In Mycobacterium sp. (strain JLS), this protein is Putative glutamate--cysteine ligase 2-2.